A 135-amino-acid polypeptide reads, in one-letter code: Transcription antitermination protein NusB (135 aa).

This sequence belongs to the NusB family.

Its function is as follows. Involved in transcription antitermination. Required for transcription of ribosomal RNA (rRNA) genes. Binds specifically to the boxA antiterminator sequence of the ribosomal RNA (rrn) operons. The sequence is that of Transcription antitermination protein NusB from Clostridium perfringens (strain SM101 / Type A).